A 224-amino-acid chain; its full sequence is ATP-dependent dethiobiotin synthetase BioD (224 aa).

ATP is bound at residue 14 to 19 (GIGKTV). Thr18 lines the Mg(2+) pocket. The active site involves Lys39. A substrate-binding site is contributed by Ser43. ATP is bound by residues Asp56, 117-120 (EGVG), and 177-178 (NE). Positions 56 and 117 each coordinate Mg(2+).

It belongs to the dethiobiotin synthetase family. In terms of assembly, homodimer. It depends on Mg(2+) as a cofactor.

It localises to the cytoplasm. It catalyses the reaction (7R,8S)-7,8-diammoniononanoate + CO2 + ATP = (4R,5S)-dethiobiotin + ADP + phosphate + 3 H(+). The protein operates within cofactor biosynthesis; biotin biosynthesis; biotin from 7,8-diaminononanoate: step 1/2. In terms of biological role, catalyzes a mechanistically unusual reaction, the ATP-dependent insertion of CO2 between the N7 and N8 nitrogen atoms of 7,8-diaminopelargonic acid (DAPA, also called 7,8-diammoniononanoate) to form a ureido ring. In Xanthomonas campestris pv. campestris (strain ATCC 33913 / DSM 3586 / NCPPB 528 / LMG 568 / P 25), this protein is ATP-dependent dethiobiotin synthetase BioD.